A 117-amino-acid polypeptide reads, in one-letter code: uncharacterized protein (117 aa).

A run of 4 helical transmembrane segments spans residues 3 to 23 (AVPI…NILL), 40 to 60 (FLTP…LLFA), 66 to 86 (LEVS…LIIA), and 94 to 114 (PFHL…IFLA).

This sequence to E.coli and S.aureus ethidium bromide resistance proteins (ebr/QacC/EmrE/MvrC).

Its subcellular location is the cell membrane. This is an uncharacterized protein from Sinorhizobium fredii (strain NBRC 101917 / NGR234).